A 91-amino-acid chain; its full sequence is UPF0250 protein Pfl01_4965 (91 aa).

Belongs to the UPF0250 family.

The sequence is that of UPF0250 protein Pfl01_4965 from Pseudomonas fluorescens (strain Pf0-1).